The primary structure comprises 191 residues: Protein GrpE (191 aa).

2 stretches are compositionally biased toward basic and acidic residues: residues 1–19 (MKDE…EPES) and 29–45 (QQGE…GEIK). Residues 1-45 (MKDEHNQEHDHLSPKEPESYQKAYACKEQQGEEKQEASEKEGEIK) form a disordered region.

The protein belongs to the GrpE family. As to quaternary structure, homodimer.

The protein resides in the cytoplasm. Functionally, participates actively in the response to hyperosmotic and heat shock by preventing the aggregation of stress-denatured proteins, in association with DnaK and GrpE. It is the nucleotide exchange factor for DnaK and may function as a thermosensor. Unfolded proteins bind initially to DnaJ; upon interaction with the DnaJ-bound protein, DnaK hydrolyzes its bound ATP, resulting in the formation of a stable complex. GrpE releases ADP from DnaK; ATP binding to DnaK triggers the release of the substrate protein, thus completing the reaction cycle. Several rounds of ATP-dependent interactions between DnaJ, DnaK and GrpE are required for fully efficient folding. The polypeptide is Protein GrpE (Helicobacter pylori (strain J99 / ATCC 700824) (Campylobacter pylori J99)).